Reading from the N-terminus, the 305-residue chain is Foldase protein PrsA (305 aa).

Positions 1–19 (MKKWFIALAGLLLTVTLAG) are cleaved as a signal peptide. Cys20 carries the N-palmitoyl cysteine lipid modification. Cys20 is lipidated: S-diacylglycerol cysteine. The PpiC domain maps to 136 to 235 (EPEVSVAHIL…YGYHVILMLK (100 aa)).

This sequence belongs to the PrsA family.

The protein resides in the cell membrane. It carries out the reaction [protein]-peptidylproline (omega=180) = [protein]-peptidylproline (omega=0). Functionally, plays a major role in protein secretion by helping the post-translocational extracellular folding of several secreted proteins. In Levilactobacillus brevis (strain ATCC 367 / BCRC 12310 / CIP 105137 / JCM 1170 / LMG 11437 / NCIMB 947 / NCTC 947) (Lactobacillus brevis), this protein is Foldase protein PrsA.